A 396-amino-acid chain; its full sequence is Putative nickel insertion protein (396 aa).

Positions Arg333–Val355 are disordered.

This sequence belongs to the LarC family.

This is Putative nickel insertion protein from Rhodopirellula baltica (strain DSM 10527 / NCIMB 13988 / SH1).